A 744-amino-acid polypeptide reads, in one-letter code: Glucosamine inositolphosphorylceramide transferase 1 (744 aa).

Helical transmembrane passes span 31–51 (FLVA…WLVV), 378–398 (SLFG…VGFV), and 460–480 (LFFC…VHFL). Residues N534, 558–563 (NSLNNR), 579–581 (DDD), R609, and 665–669 (FNCED) each bind substrate. Mn(2+) is bound at residue D581. Residues C667 and C718 are joined by a disulfide bond. Residue D669 is part of the active site.

This sequence belongs to the glycosyltransferase 64 family. Requires Mn(2+) as cofactor. As to expression, highly expressed in almost all tissues.

Its subcellular location is the membrane. It participates in sphingolipid metabolism. Functionally, essential protein. Glycosyltransferase that mediates the glycosylation of glycosylinositol phosphorylceramides (GIPCs), the major sphingolipids in the plasma membrane; acts as a HexN(Ac)-specific GIPC sugar transferase. Responsible for the glycosylation of a subgroup of GIPCs found in seeds and pollen that contain GlcNAc and GlcN (GlcN(Ac)). Maybe involved in the maintenance of cell-cell adhesion. In Oryza sativa subsp. japonica (Rice), this protein is Glucosamine inositolphosphorylceramide transferase 1.